Reading from the N-terminus, the 168-residue chain is Zinc finger A20 and AN1 domain-containing stress-associated protein 1 (168 aa).

The A20-type zinc-finger motif lies at 13-47 (PSEPKLCVKGCGFFGSPSNMNLCSKCYRDIRATEE). 4 residues coordinate Zn(2+): C19, C23, C35, and C38. Residues 49-105 (TASAKAAVEKSLNPNKPKTQPQQSQEITQGVLGSGSSSSSTRGGDSAAAPLDPPKST) are disordered. Residues 60–76 (LNPNKPKTQPQQSQEIT) are compositionally biased toward polar residues. A compositionally biased stretch (low complexity) spans 82-94 (SGSSSSSTRGGDS). The AN1-type zinc-finger motif lies at 103–149 (KSTATRCLSCNKKVGVTGFKCRCGSTFCGTHRYPESHECQFDFKGVA). Zn(2+) is bound by residues C109, C112, C123, C125, C130, H133, H139, and C141.

May be involved in environmental stress response. In Arabidopsis thaliana (Mouse-ear cress), this protein is Zinc finger A20 and AN1 domain-containing stress-associated protein 1 (SAP1).